A 1302-amino-acid chain; its full sequence is Regulator of telomere elongation helicase 1 (1302 aa).

In terms of domain architecture, Helicase ATP-binding spans 7–297; sequence NGVTVDFPFQ…TKTAQQGEPH (291 aa). 42–49 lines the ATP pocket; it reads SHTGTGKT. Cysteine 146, cysteine 164, cysteine 173, and cysteine 208 together coordinate [4Fe-4S] cluster. The short motif at 152 to 168 is the Nuclear localization signal element; the sequence is KKQESNHIQIHLCRKKV. The DEAH box signature appears at 251-254; sequence DEAH. Residues 758–767 show a composition bias toward low complexity; the sequence is PAPAPRATAP. Residues 758–819 form a disordered region; that stretch reads PAPAPRATAP…AAGDPESSLC (62 aa). A compositionally biased stretch (basic and acidic residues) spans 770 to 780; the sequence is REGEDAVREVK. The Nuclear localization signal motif lies at 873–879; that stretch reads PRGGRKK. 4 disordered regions span residues 981-1006, 1019-1058, 1134-1153, and 1160-1234; these read RPEH…APDP, DPRE…GKQG, CTDL…PQEE, and VLTH…QAAG. Residues 1178–1187 are compositionally biased toward polar residues; sequence KTQSKISSLL. Positions 1180-1187 match the PIP-box motif; sequence QSKISSLL.

It belongs to the helicase family. RAD3/XPD subfamily. As to quaternary structure, interacts with TERF1. Interacts (via PIP-box) with PCNA; the interaction is direct and essential for suppressing telomere fragility. Interacts with MMS19; the interaction mediates the association of RTEL1 with the cytosolic iron-sulfur protein assembly (CIA) complex.

The protein localises to the nucleus. The catalysed reaction is ATP + H2O = ADP + phosphate + H(+). A probable ATP-dependent DNA helicase implicated in telomere-length regulation, DNA repair and the maintenance of genomic stability. Acts as an anti-recombinase to counteract toxic recombination and limit crossover during meiosis. Regulates meiotic recombination and crossover homeostasis by physically dissociating strand invasion events and thereby promotes noncrossover repair by meiotic synthesis dependent strand annealing (SDSA) as well as disassembly of D loop recombination intermediates. Also disassembles T loops and prevents telomere fragility by counteracting telomeric G4-DNA structures, which together ensure the dynamics and stability of the telomere. The sequence is that of Regulator of telomere elongation helicase 1 from Pongo abelii (Sumatran orangutan).